A 138-amino-acid polypeptide reads, in one-letter code: DNA-directed RNA polymerase subunit omega (138 aa).

Residues 117–138 (NLLGRDNFFSTPENRNTSNTDS) are disordered. Positions 124 to 138 (FFSTPENRNTSNTDS) are enriched in polar residues.

It belongs to the RNA polymerase subunit omega family. In terms of assembly, the RNAP catalytic core consists of 2 alpha, 1 beta, 1 beta' and 1 omega subunit. When a sigma factor is associated with the core the holoenzyme is formed, which can initiate transcription.

It carries out the reaction RNA(n) + a ribonucleoside 5'-triphosphate = RNA(n+1) + diphosphate. Promotes RNA polymerase assembly. Latches the N- and C-terminal regions of the beta' subunit thereby facilitating its interaction with the beta and alpha subunits. In Ehrlichia canis (strain Jake), this protein is DNA-directed RNA polymerase subunit omega.